The chain runs to 276 residues: Diaminopimelate epimerase (276 aa).

Substrate-binding residues include Asn-13, Gln-46, and Asn-66. The Proton donor role is filled by Cys-75. Substrate contacts are provided by residues 76–77, Asn-159, Asn-192, and 210–211; these read GN and ER. Residue Cys-219 is the Proton acceptor of the active site. Position 220-221 (220-221) interacts with substrate; it reads GT.

Belongs to the diaminopimelate epimerase family. Homodimer.

The protein resides in the cytoplasm. The enzyme catalyses (2S,6S)-2,6-diaminopimelate = meso-2,6-diaminopimelate. It functions in the pathway amino-acid biosynthesis; L-lysine biosynthesis via DAP pathway; DL-2,6-diaminopimelate from LL-2,6-diaminopimelate: step 1/1. Its function is as follows. Catalyzes the stereoinversion of LL-2,6-diaminopimelate (L,L-DAP) to meso-diaminopimelate (meso-DAP), a precursor of L-lysine and an essential component of the bacterial peptidoglycan. The protein is Diaminopimelate epimerase of Pseudomonas putida (strain GB-1).